A 332-amino-acid chain; its full sequence is Delta-aminolevulinic acid dehydratase (332 aa).

Lys202 acts as the Schiff-base intermediate with substrate in catalysis. 5-aminolevulinate contacts are provided by Arg212 and Lys225. Lys256 (schiff-base intermediate with substrate) is an active-site residue. 5-aminolevulinate contacts are provided by Ser282 and Tyr321.

It belongs to the ALAD family. In terms of assembly, homohexamer.

The enzyme catalyses 2 5-aminolevulinate = porphobilinogen + 2 H2O + H(+). The protein operates within porphyrin-containing compound metabolism; protoporphyrin-IX biosynthesis; coproporphyrinogen-III from 5-aminolevulinate: step 1/4. In terms of biological role, catalyzes an early step in the biosynthesis of tetrapyrroles. Binds two molecules of 5-aminolevulinate per subunit, each at a distinct site, and catalyzes their condensation to form porphobilinogen. This chain is Delta-aminolevulinic acid dehydratase (hemB), found in Rhodobacter capsulatus (Rhodopseudomonas capsulata).